The following is a 469-amino-acid chain: Histone acetyltransferase ESA1 (469 aa).

Residues 1 to 26 (MALAEADLPNGKTNGKASGSEETPAP) form a disordered region. The span at 11-21 (GKTNGKASGSE) shows a compositional bias: polar residues. The Tudor-knot domain occupies 39 to 92 (LRVGCKVHVEKDGEDRVAEILSVQMRRGNLEFYVHYVEFNKRLDERIAATRVDL). The tract at residues 98-163 (WPEPEKPKKP…GTTQDPDNFN (66 aa)) is disordered. The segment covering 118 to 127 (EKKKNPSKKQ) has biased composition (basic residues). Polar residues-rich tracts occupy residues 130–139 (TDSAATTPGA) and 150–160 (LQVNGTTQDPD). The region spanning 185–457 (ARVRNLQRIV…VNSELLKWKP (273 aa)) is the MYST-type HAT domain. The C2HC MYST-type; degenerate zinc finger occupies 218 to 243 (IYICDFTLCYFGSKKQFERFRSKSTL). The residue at position 285 (Lys-285) is an N6-acetyllysine; by autocatalysis. Residues 326-330 (ACILT) and 335-341 (QRHGYGR) each bind acetyl-CoA. Glu-361 serves as the catalytic Proton donor/acceptor. An acetyl-CoA-binding site is contributed by Ser-365.

It belongs to the MYST (SAS/MOZ) family. Component of the NuA4 histone acetyltransferase complex. Post-translationally, autoacetylation at Lys-285 is required for proper function.

The protein localises to the nucleus. It is found in the chromosome. It catalyses the reaction L-lysyl-[histone] + acetyl-CoA = N(6)-acetyl-L-lysyl-[histone] + CoA + H(+). The enzyme catalyses L-lysyl-[protein] + acetyl-CoA = N(6)-acetyl-L-lysyl-[protein] + CoA + H(+). The catalysed reaction is 2-hydroxyisobutanoyl-CoA + L-lysyl-[protein] = N(6)-(2-hydroxyisobutanoyl)-L-lysyl-[protein] + CoA + H(+). It carries out the reaction (2E)-butenoyl-CoA + L-lysyl-[protein] = N(6)-(2E)-butenoyl-L-lysyl-[protein] + CoA + H(+). Its function is as follows. Catalytic component of the NuA4 histone acetyltransferase (HAT) complex which is involved in epigenetic transcriptional activation of selected genes principally by acetylation of nucleosomal histones H4, H3, H2B, H2A and H2A variant H2A.Z. Acetylates histone H4 to form H4K5ac, H4K8ac, H4K12ac and H4K16ac, histone H3 to form H3K14ac, and histone H2A to form H2AK4ac and H2AK7ac. The NuA4 complex is involved in the DNA damage response and is required for chromosome segregation. The NuA4 complex plays a direct role in repair of DNA double-strand breaks (DSBs) through homologous recombination. Recruitment to promoters depends on H3K4me. Also acetylates non-histone proteins. In addition to protein acetyltransferase, can use different acyl-CoA substrates, such as 2-hydroxyisobutanoyl-CoA (2-hydroxyisobutyryl-CoA) or (2E)-butenoyl-CoA (crotonyl-CoA), and is able to mediate protein 2-hydroxyisobutyrylation and crotonylation, respectively. In Yarrowia lipolytica (strain CLIB 122 / E 150) (Yeast), this protein is Histone acetyltransferase ESA1 (ESA1).